A 138-amino-acid polypeptide reads, in one-letter code: Large ribosomal subunit protein uL16 (138 aa).

The span at 1-13 shows a compositional bias: basic residues; the sequence is MLQPARRKYRKEQ. Residues 1-22 are disordered; sequence MLQPARRKYRKEQKGRNTGVAT.

This sequence belongs to the universal ribosomal protein uL16 family. As to quaternary structure, part of the 50S ribosomal subunit.

In terms of biological role, binds 23S rRNA and is also seen to make contacts with the A and possibly P site tRNAs. The protein is Large ribosomal subunit protein uL16 of Polaromonas naphthalenivorans (strain CJ2).